Here is a 351-residue protein sequence, read N- to C-terminus: Porphobilinogen deaminase (351 aa).

S-(dipyrrolylmethanemethyl)cysteine is present on C242.

Belongs to the HMBS family. In terms of assembly, monomer. Requires dipyrromethane as cofactor.

The enzyme catalyses 4 porphobilinogen + H2O = hydroxymethylbilane + 4 NH4(+). Its pathway is porphyrin-containing compound metabolism; protoporphyrin-IX biosynthesis; coproporphyrinogen-III from 5-aminolevulinate: step 2/4. Functionally, tetrapolymerization of the monopyrrole PBG into the hydroxymethylbilane pre-uroporphyrinogen in several discrete steps. The sequence is that of Porphobilinogen deaminase from Rickettsia africae (strain ESF-5).